An 867-amino-acid chain; its full sequence is Putative ribosome biogenesis ATPase nvl (867 aa).

Residues 70–203 (LSSCESSENE…NNNNGNNKDN (134 aa)) are disordered. Polar residues predominate over residues 110 to 122 (EQLTSQYKQNIKN). Low complexity-rich tracts occupy residues 123–132 (TPPTTTTTTP), 141–172 (IPSN…TPNS), and 180–203 (NSSN…NKDN). An ATP-binding site is contributed by 257–264 (GPSGCGKT). The segment at 351 to 370 (SSNNSTNEPNEQTEQQQQQQ) is disordered. ATP is bound at residue 607 to 614 (GPPGCGKT). Over residues 834–843 (DINKSRDKKP) the composition is skewed to basic and acidic residues. The segment at 834–855 (DINKSRDKKPNNSNNIPITNNI) is disordered. Low complexity predominate over residues 844 to 855 (NNSNNIPITNNI).

This sequence belongs to the AAA ATPase family.

It is found in the nucleus. Its subcellular location is the nucleolus. The protein localises to the nucleoplasm. Its function is as follows. Involved in ribosome biogenesis. The polypeptide is Putative ribosome biogenesis ATPase nvl (nvl) (Dictyostelium discoideum (Social amoeba)).